Consider the following 306-residue polypeptide: Cell division protein ZipA (306 aa).

Over 1 to 6 (MENLQL) the chain is Periplasmic. Residues 7-27 (VLLLIGAIAIIAVLVHGFWSI) form a helical membrane-spanning segment. The Cytoplasmic segment spans residues 28-306 (RKQQPKGYKQ…NYIQRIRAQA (279 aa)).

This sequence belongs to the ZipA family. In terms of assembly, interacts with FtsZ via their C-terminal domains.

It is found in the cell inner membrane. In terms of biological role, essential cell division protein that stabilizes the FtsZ protofilaments by cross-linking them and that serves as a cytoplasmic membrane anchor for the Z ring. Also required for the recruitment to the septal ring of downstream cell division proteins. This Shewanella halifaxensis (strain HAW-EB4) protein is Cell division protein ZipA.